Here is a 98-residue protein sequence, read N- to C-terminus: Large ribosomal subunit protein uL23 (98 aa).

Belongs to the universal ribosomal protein uL23 family. Part of the 50S ribosomal subunit. Contacts protein L29, and trigger factor when it is bound to the ribosome.

Its function is as follows. One of the early assembly proteins it binds 23S rRNA. One of the proteins that surrounds the polypeptide exit tunnel on the outside of the ribosome. Forms the main docking site for trigger factor binding to the ribosome. This is Large ribosomal subunit protein uL23 from Methylorubrum extorquens (strain CM4 / NCIMB 13688) (Methylobacterium extorquens).